A 261-amino-acid polypeptide reads, in one-letter code: MDTLTSAPLLTTKFKPSFSPQQKPCFPHRRRFENGKKNQSIVPVARLFGPAIFEASKLKVLFLGIDENKHPGNLPRTYTLTHSDVTSKLTLAISQTINNSQLQGWYNRLQRDEVVAQWKKVKGKMSLHVHCHISGGHFLLDIFARLRYFIFCKELPVVLKAFVHGDGNLFNNYPELEESLVWVFFHSKIREFNKVECWGPLKEASQPTSGTHSDLKLPQSCEEDCECCFPPLNLSPIPCSNEVINNTYEPIDGIGTQHGNL.

The transit peptide at 1-54 (MDTLTSAPLLTTKFKPSFSPQQKPCFPHRRRFENGKKNQSIVPVARLFGPAIFE) directs the protein to the chloroplast.

This sequence belongs to the staygreen family.

It is found in the plastid. The protein resides in the chloroplast. Functionally, probably involved in the disassembling mechanism of the intact light-harvesting complex of photosystem II (LHCII) in the thylakoid membranes. Required for the chlorophyll breakdown pathway. Acts independent and upstream of pheophorbide a oxygenase (PAO). The chain is Protein STAY-GREEN, chloroplastic (SGR) from Pisum sativum (Garden pea).